The sequence spans 512 residues: GMP synthase [glutamine-hydrolyzing] (512 aa).

Residues 7–197 form the Glutamine amidotransferase type-1 domain; sequence TILILDFGGQ…LFEVCDCSAD (191 aa). Cys-84 acts as the Nucleophile in catalysis. Catalysis depends on residues His-171 and Glu-173. The region spanning 198–387 is the GMPS ATP-PPase domain; it reads WTMDSLIEQT…LGIPDEILYR (190 aa). 225 to 231 contributes to the ATP binding site; sequence SGGVDSA.

Homodimer.

The catalysed reaction is XMP + L-glutamine + ATP + H2O = GMP + L-glutamate + AMP + diphosphate + 2 H(+). It functions in the pathway purine metabolism; GMP biosynthesis; GMP from XMP (L-Gln route): step 1/1. Catalyzes the synthesis of GMP from XMP. This Caldanaerobacter subterraneus subsp. tengcongensis (strain DSM 15242 / JCM 11007 / NBRC 100824 / MB4) (Thermoanaerobacter tengcongensis) protein is GMP synthase [glutamine-hydrolyzing].